The sequence spans 364 residues: Glutamine synthetase (364 aa).

One can recognise a GS beta-grasp domain in the interval V15–G94. A GS catalytic domain is found at H101–F364.

This sequence belongs to the glutamine synthetase family. As to quaternary structure, homooctamer.

It localises to the cytoplasm. The catalysed reaction is L-glutamate + NH4(+) + ATP = L-glutamine + ADP + phosphate + H(+). In Yarrowia lipolytica (strain CLIB 122 / E 150) (Yeast), this protein is Glutamine synthetase (GLN1).